The following is a 500-amino-acid chain: MTLVDVRTPDPKRFIPGATGDWEVIVGMEVHAQVLSNSKLFSGASTEFGKPQNSNVSLVDAAMPGMLPVINEECVRQAVRTGLGLKAQINKRSLFDRKNYFYPDLPQGYQISQFKDPIVGEGKIVISLGPDRQGQFEDIEIGIERLHLEQDAGKSLHDQHATMSYVDLNRSGVALMEIVSKPDMRSSDEAKAYMTKLRSIVRYLGTCDGNMDEGSMRADVNVSVRRPGEGFGTRCEIKNVNSIRFIGQAIEYEARRQIGILEDGGTIEQETRLFDPNKGETRSMRSKEDAHDYRYFPDPDLLPLEFDDAFVSALAVDLPELPDDKKERFVRELGLSIYDASVLVSEKAIADYFEAVAAGRDGKTAANWVINDLLGALNRTGKDIEQTPVSPAQLGAIIDLIKAGTISGKIAKDLFEIVLTEGGDPAEIVDARGMKQVTDTGAIEKAVDEIIAANPDQVEKVKAKPTLAAWFVGQVMKATGGKANPQAVQALVKAKLGIEE.

It belongs to the GatB/GatE family. GatB subfamily. As to quaternary structure, heterotrimer of A, B and C subunits.

The enzyme catalyses L-glutamyl-tRNA(Gln) + L-glutamine + ATP + H2O = L-glutaminyl-tRNA(Gln) + L-glutamate + ADP + phosphate + H(+). It carries out the reaction L-aspartyl-tRNA(Asn) + L-glutamine + ATP + H2O = L-asparaginyl-tRNA(Asn) + L-glutamate + ADP + phosphate + 2 H(+). Allows the formation of correctly charged Asn-tRNA(Asn) or Gln-tRNA(Gln) through the transamidation of misacylated Asp-tRNA(Asn) or Glu-tRNA(Gln) in organisms which lack either or both of asparaginyl-tRNA or glutaminyl-tRNA synthetases. The reaction takes place in the presence of glutamine and ATP through an activated phospho-Asp-tRNA(Asn) or phospho-Glu-tRNA(Gln). This is Aspartyl/glutamyl-tRNA(Asn/Gln) amidotransferase subunit B from Rhizobium leguminosarum bv. trifolii (strain WSM2304).